The chain runs to 216 residues: Protein-L-isoaspartate O-methyltransferase (216 aa).

S66 is a catalytic residue.

Belongs to the methyltransferase superfamily. L-isoaspartyl/D-aspartyl protein methyltransferase family.

The protein resides in the cytoplasm. It carries out the reaction [protein]-L-isoaspartate + S-adenosyl-L-methionine = [protein]-L-isoaspartate alpha-methyl ester + S-adenosyl-L-homocysteine. In terms of biological role, catalyzes the methyl esterification of L-isoaspartyl residues in peptides and proteins that result from spontaneous decomposition of normal L-aspartyl and L-asparaginyl residues. It plays a role in the repair and/or degradation of damaged proteins. This Colwellia psychrerythraea (strain 34H / ATCC BAA-681) (Vibrio psychroerythus) protein is Protein-L-isoaspartate O-methyltransferase.